The chain runs to 428 residues: Histidine--tRNA ligase (428 aa).

This sequence belongs to the class-II aminoacyl-tRNA synthetase family. As to quaternary structure, homodimer.

The protein resides in the cytoplasm. The enzyme catalyses tRNA(His) + L-histidine + ATP = L-histidyl-tRNA(His) + AMP + diphosphate + H(+). This Chlamydia trachomatis serovar A (strain ATCC VR-571B / DSM 19440 / HAR-13) protein is Histidine--tRNA ligase.